The chain runs to 493 residues: MSNYFNTLNLREKLDQLGRCRFMDRSEFSDGCNFLKGKKIVIVGCGAQGLNQGLNMRDSGLDISYALRKAAIEEKRPSFQRATENGFKVGTYEELIPTADLVINLTPDKQHSKVVSDVMPLMKQGAAFGYSHGFNIVEVGEQIREDITVVMSAPKCPGTEVREEYKRGFGVPTLIAVHPANDPKGEGMAIAKAWASATGGDRAGVLESSFVAEVKSDLMGEQTILCGMLQAGSIVCYDKLIADGKDPAYAGKLIQYGWETITEALKQGGITLMMDRLSNAAKLRAFELSEQIKEKLGFLYLKHMDDIISGEFSRVMMEDWANGDKDLLAWREATGKTAFENAPKADGIKISEQEYFDNGVLMVAMVKAGVEMAFDAMVASGIYEESAYYESLHELPLIANTIARKRLYEMNVVISDTAEYGNYLFSNVATPILAKEIIPALQKGDLGEPTPAVDIDNVTLRDVNDEIRNHPVELIGLELRGYMTDMKRISSQG.

In terms of domain architecture, KARI N-terminal Rossmann spans 14–208 (LDQLGRCRFM…GGDRAGVLES (195 aa)). NADP(+)-binding positions include 45–48 (CGAQ), Arg-68, Arg-76, Ser-78, and 108–110 (DKQ). Residue His-132 is part of the active site. Residue Gly-158 participates in NADP(+) binding. KARI C-terminal knotted domains lie at 209-345 (SFVA…APKA) and 346-486 (DGIK…MTDM). Residues Asp-217, Glu-221, Glu-390, and Glu-394 each contribute to the Mg(2+) site. Ser-415 lines the substrate pocket.

Belongs to the ketol-acid reductoisomerase family. The cofactor is Mg(2+).

The catalysed reaction is (2R)-2,3-dihydroxy-3-methylbutanoate + NADP(+) = (2S)-2-acetolactate + NADPH + H(+). It carries out the reaction (2R,3R)-2,3-dihydroxy-3-methylpentanoate + NADP(+) = (S)-2-ethyl-2-hydroxy-3-oxobutanoate + NADPH + H(+). Its pathway is amino-acid biosynthesis; L-isoleucine biosynthesis; L-isoleucine from 2-oxobutanoate: step 2/4. It functions in the pathway amino-acid biosynthesis; L-valine biosynthesis; L-valine from pyruvate: step 2/4. Functionally, involved in the biosynthesis of branched-chain amino acids (BCAA). Catalyzes an alkyl-migration followed by a ketol-acid reduction of (S)-2-acetolactate (S2AL) to yield (R)-2,3-dihydroxy-isovalerate. In the isomerase reaction, S2AL is rearranged via a Mg-dependent methyl migration to produce 3-hydroxy-3-methyl-2-ketobutyrate (HMKB). In the reductase reaction, this 2-ketoacid undergoes a metal-dependent reduction by NADPH to yield (R)-2,3-dihydroxy-isovalerate. This chain is Ketol-acid reductoisomerase (NADP(+)), found in Actinobacillus succinogenes (strain ATCC 55618 / DSM 22257 / CCUG 43843 / 130Z).